Consider the following 628-residue polypeptide: Serine/threonine-protein phosphatase 2A regulatory subunit psrA (628 aa).

Residues 1–22 (MKNDHINYQQNLSQSPILNSNK) are compositionally biased toward polar residues. 3 disordered regions span residues 1-61 (MKND…QIPF), 500-558 (KKKQ…DKPS), and 577-628 (SSHR…YTFT). 2 stretches are compositionally biased toward low complexity: residues 23–58 (NQTQ…SPQQ) and 524–547 (QINQ…NNNN). Residues 600-618 (NNHTNHDSEIENEVKEDFR) show a composition bias toward basic and acidic residues.

The protein belongs to the phosphatase 2A regulatory subunit B56 family. As to quaternary structure, PP2A consists of a trimeric holoenzyme, composed of a 37 kDa catalytic subunit (C subunit) and a 65 kDa constant regulatory subunit (A subunit), that associates with a variety of regulatory subunits (B subunit) such as phr2AB (B55) and psrA (B56 homolog). The trimer may partially dissociates into a core 'AC' dimer equally active compared to the trimer. Seems to play a role in proper anterior patterning (pstO and pstAB).

It is found in the cytoplasm. It localises to the cytosol. Involved in developmental cell fate decision. This Dictyostelium discoideum (Social amoeba) protein is Serine/threonine-protein phosphatase 2A regulatory subunit psrA (psrA).